Reading from the N-terminus, the 375-residue chain is SAP-like protein BP-73 (375 aa).

Disordered regions lie at residues 46-113 (PNNH…VPGE), 130-233 (RARG…VKFQ), and 257-315 (TLEN…PSLQ). Positions 59–70 (HQKGGSARRKSK) are enriched in basic residues. Positions 76 to 86 (DDSENIDEFDT) are enriched in acidic residues. Residues 88–109 (IMSSKNGPPISLTSNSRPQATS) are compositionally biased toward polar residues. Composition is skewed to basic and acidic residues over residues 134–152 (KGKE…ERGS) and 163–186 (HSVD…KRSN). A compositionally biased stretch (polar residues) spans 187–197 (ESGNKQNSSIF). Over residues 295-311 (DEPDASDTDEPSGEYDE) the composition is skewed to acidic residues. An interaction with WAXY region spans residues 338–375 (DLSTLKVTELRELAKSRGIKGYSKMKKNDLVELLSNMA).

In terms of assembly, binds to the DNA in the promoter region of WAXY containing the sequence 5'-ACGCACGCTAACGTGA-3'. As to expression, expressed in tissues with high cell division activities: in root tips, stem node, panicle, flower and immature seed. Weakly expressed in root and leaf.

Its function is as follows. May regulate cell proliferation and plant growth. The chain is SAP-like protein BP-73 (BP-73) from Oryza sativa subsp. japonica (Rice).